Reading from the N-terminus, the 283-residue chain is MEMO1 family protein DKAM_1357 (283 aa).

It belongs to the MEMO1 family.

This Desulfurococcus amylolyticus (strain DSM 18924 / JCM 16383 / VKM B-2413 / 1221n) (Desulfurococcus kamchatkensis) protein is MEMO1 family protein DKAM_1357.